Here is a 203-residue protein sequence, read N- to C-terminus: ATP-dependent Clp protease proteolytic subunit (203 aa).

Catalysis depends on Ser-100, which acts as the Nucleophile. His-125 is a catalytic residue.

It belongs to the peptidase S14 family. In terms of assembly, fourteen ClpP subunits assemble into 2 heptameric rings which stack back to back to give a disk-like structure with a central cavity, resembling the structure of eukaryotic proteasomes.

It is found in the cytoplasm. It carries out the reaction Hydrolysis of proteins to small peptides in the presence of ATP and magnesium. alpha-casein is the usual test substrate. In the absence of ATP, only oligopeptides shorter than five residues are hydrolyzed (such as succinyl-Leu-Tyr-|-NHMec, and Leu-Tyr-Leu-|-Tyr-Trp, in which cleavage of the -Tyr-|-Leu- and -Tyr-|-Trp bonds also occurs).. Its function is as follows. Cleaves peptides in various proteins in a process that requires ATP hydrolysis. Has a chymotrypsin-like activity. Plays a major role in the degradation of misfolded proteins. The chain is ATP-dependent Clp protease proteolytic subunit from Anaeromyxobacter sp. (strain K).